Consider the following 469-residue polypeptide: Protein DETOXIFICATION 18 (469 aa).

12 helical membrane passes run 40–60, 73–93, 121–141, 152–172, 183–203, 206–226, 252–274, 293–313, 344–364, 374–394, 406–426, and 438–458; these read LPMIFTNLFYYCIPLTSVMFA, LANSWATVTGFAFMTGLSGAL, LVFTILITILWFFTESVFLLL, ALYMKYLAPGLLAYGFLQNIL, PLVLFSFLPLVINIGTTYALV, AGLGFIGAPIATSISLWIAFV, HVVLNLTLSIPSAAMVCLEYWAF, LVAICVNTESISYMLTCGLSA, VLALGVVIAILVGHDAWVGLF, FASLRFFLAASITLDSIQGVL, LATVINLGTFYLIGMPISVLC, and WIGLICGMFCQSASLLLMTIF.

It belongs to the multi antimicrobial extrusion (MATE) (TC 2.A.66.1) family.

It localises to the membrane. The protein is Protein DETOXIFICATION 18 of Arabidopsis thaliana (Mouse-ear cress).